We begin with the raw amino-acid sequence, 628 residues long: DNA mismatch repair protein MutL (628 aa).

Residues Gly-350–Lys-402 form a disordered region. Positions Ser-356 to Gly-368 are enriched in polar residues. Residues Lys-369–Lys-393 are compositionally biased toward basic and acidic residues.

Belongs to the DNA mismatch repair MutL/HexB family.

In terms of biological role, this protein is involved in the repair of mismatches in DNA. It is required for dam-dependent methyl-directed DNA mismatch repair. May act as a 'molecular matchmaker', a protein that promotes the formation of a stable complex between two or more DNA-binding proteins in an ATP-dependent manner without itself being part of a final effector complex. This Wolbachia sp. subsp. Brugia malayi (strain TRS) protein is DNA mismatch repair protein MutL.